We begin with the raw amino-acid sequence, 226 residues long: Lysosomal-associated transmembrane protein 4B (226 aa).

Helical transmembrane passes span 26 to 46, 72 to 92, 100 to 120, and 153 to 173; these read ILLG…LLSA, MCIA…ATYG, WIIP…LVAI, and CLVL…GYLI. The tract at residues 205–221 is required for NEDD4 interaction; sequence PPYDDATVNGAAKEPPP.

This sequence belongs to the LAPTM4/LAPTM5 transporter family. Homooligomer; upon reaching the lysosomes. Interacts with MCOLN1. Interacts with NEDD4; may play a role in the lysosomal sorting of LAPTM4B; enhances HGS association with NEDD4; mediates inhibition of EGFR degradation. Interacts with PIP5K1C; promotes SNX5 association with LAPTM4B; kinase activity of PIP5K1C is required; interaction is regulated by phosphatidylinositol 4,5-bisphosphate generated by PIP5K1C. Interacts with HGS; promotes HGS ubiquitination. Interacts with SNX5. Interacts with SLC3A2 and SLC7A5; recruits SLC3A2 and SLC7A5 to lysosomes to promote leucine uptake into these organelles and is required for mTORC1 activation. Interacts with LRRC32; decreases TGFB1 production in regulatory T cells. Interacts with BECN1; competes with EGFR for LAPTM4B binding; regulates EGFR activity. Interacts with EGFR; positively correlates with EGFR activation. In terms of processing, undergoes proteolytic cleavage following delivery to the lysosomes. Ubiquitinated by NEDD4.

Its subcellular location is the endomembrane system. It localises to the late endosome membrane. It is found in the cell membrane. The protein resides in the cell projection. The protein localises to the lysosome membrane. Its subcellular location is the endosome membrane. It localises to the endosome. It is found in the multivesicular body membrane. The protein resides in the multivesicular body lumen. Required for optimal lysosomal function. Blocks EGF-stimulated EGFR intraluminal sorting and degradation. Conversely by binding with the phosphatidylinositol 4,5-bisphosphate, regulates its PIP5K1C interaction, inhibits HGS ubiquitination and relieves LAPTM4B inhibition of EGFR degradation. Recruits SLC3A2 and SLC7A5 (the Leu transporter) to the lysosome, promoting entry of leucine and other essential amino acid (EAA) into the lysosome, stimulating activation of proton-transporting vacuolar (V)-ATPase protein pump (V-ATPase) and hence mTORC1 activation. Plays a role as negative regulator of TGFB1 production in regulatory T cells. Binds ceramide and facilitates its exit from late endosome in order to control cell death pathways. The polypeptide is Lysosomal-associated transmembrane protein 4B (Macaca fascicularis (Crab-eating macaque)).